The chain runs to 160 residues: NADH-quinone oxidoreductase subunit B (160 aa).

[4Fe-4S] cluster-binding residues include C39, C40, C104, and C135.

It belongs to the complex I 20 kDa subunit family. In terms of assembly, NDH-1 is composed of 14 different subunits. Subunits NuoB, C, D, E, F, and G constitute the peripheral sector of the complex. [4Fe-4S] cluster serves as cofactor.

It localises to the cell membrane. The enzyme catalyses a quinone + NADH + 5 H(+)(in) = a quinol + NAD(+) + 4 H(+)(out). NDH-1 shuttles electrons from NADH, via FMN and iron-sulfur (Fe-S) centers, to quinones in the respiratory chain. The immediate electron acceptor for the enzyme in this species is believed to be a menaquinone. Couples the redox reaction to proton translocation (for every two electrons transferred, four hydrogen ions are translocated across the cytoplasmic membrane), and thus conserves the redox energy in a proton gradient. The polypeptide is NADH-quinone oxidoreductase subunit B (Amoebophilus asiaticus (strain 5a2)).